The primary structure comprises 298 residues: Acetylglutamate kinase (298 aa).

Residues 69 to 70 (GG), arginine 91, and asparagine 196 contribute to the substrate site.

The protein belongs to the acetylglutamate kinase family. ArgB subfamily.

The protein localises to the cytoplasm. The enzyme catalyses N-acetyl-L-glutamate + ATP = N-acetyl-L-glutamyl 5-phosphate + ADP. It functions in the pathway amino-acid biosynthesis; L-arginine biosynthesis; N(2)-acetyl-L-ornithine from L-glutamate: step 2/4. Its function is as follows. Catalyzes the ATP-dependent phosphorylation of N-acetyl-L-glutamate. The chain is Acetylglutamate kinase from Nitrobacter winogradskyi (strain ATCC 25391 / DSM 10237 / CIP 104748 / NCIMB 11846 / Nb-255).